The sequence spans 246 residues: Putative F-box/LRR-repeat protein 9 (246 aa).

Residues 18–65 (YRNWAELPPELTSSILLRLGAIEILQNAQRVCKSWRRVCQDPSMWRKI) enclose the F-box domain.

This Arabidopsis thaliana (Mouse-ear cress) protein is Putative F-box/LRR-repeat protein 9 (FBL9).